The sequence spans 351 residues: MWLSLVILGVASAIVNVSTQESCTTPNGETATCLPIESCKIFWDYVVTSGADPEINSFLRASLCRQGNYVVCCGSTLKFNSALPDRTECGLQDDFKVLGGEDTDLGEYPWMALLQQTKTSGAKSFGCGGSLISDRYVLTAAHCVVSSSYTVTMVRLGEWDLRATQDCVGSGSYQYCSPPPQDIGIESITSHPNYEKSSRGVFNDIALIRLARPVNRNKYVQPICLPLPTERTPVGENLLVAGWGATETKAQSDKKQKLKLPVTDLPACKTLYAKHNKIINDKMICAGGLKGKDSCKGDSGGPLFGQTGAGNAQFYIEGIVSYGAICGTEGFPAIYTRVSDHLDWIKQNVRV.

The first 19 residues, 1–19 (MWLSLVILGVASAIVNVST), serve as a signal peptide directing secretion. Asn16 carries N-linked (GlcNAc...) asparagine glycosylation. One can recognise a Clip domain in the interval 22 to 73 (SCTTPNGETATCLPIESCKIFWDYVVTSGADPEINSFLRASLCRQGNYVVCC). Disulfide bonds link Cys23–Cys72, Cys33–Cys64, Cys39–Cys73, Cys89–Cys224, Cys127–Cys143, Cys167–Cys176, Cys268–Cys285, and Cys295–Cys326. The Peptidase S1 domain occupies 97 to 350 (VLGGEDTDLG…HLDWIKQNVR (254 aa)). His142 acts as the Charge relay system in catalysis. Glu158, Asp160, Ala163, and Asp166 together coordinate Ca(2+). Asp204 (charge relay system) is an active-site residue. The active-site Charge relay system is Ser299.

This sequence belongs to the peptidase S1 family. CLIP subfamily. In the active form, heterodimer of a light chain and a heavy chain; disulfide-linked. In terms of processing, proteolytically cleaved.

Its subcellular location is the secreted. Cleavage of PPAF2 is Ca(2+)-independent. Inhibited by heparin. Serine endopeptidase which, by cleaving prophenoloxidase activating factor PPAF2, is required for the activation of the prophenoloxidase cascade probably following the recognition of pathogen-derived products. This Holotrichia diomphalia (Korean black chafer) protein is Phenoloxidase-activating factor 3.